The following is a 726-amino-acid chain: Eukaryotic translation initiation factor 3 subunit B (726 aa).

The tract at residues 1-94 (MSAALEDIKL…LFVECASPAD (94 aa)) is sufficient for interaction with HCR1 and TIF32. Residues 1 to 219 (MSAALEDIKL…GVVMWGGPHF (219 aa)) form a sufficient for interaction with PIC8 region. An RRM domain is found at 37–120 (QYIVVCGAPV…HRLFIYTMRD (84 aa)). WD repeat units lie at residues 142–182 (FPTS…EESV), 186–224 (RKNW…RLRR), 235–283 (VSPS…LQST), 331–374 (LKVP…MSCK), 442–485 (ELKD…FAPE), 505–549 (ITDK…TDKN), and 566–611 (NSFP…VKEE).

Belongs to the eIF-3 subunit B family. Component of the eukaryotic translation initiation factor 3 (eIF-3) complex.

The protein localises to the cytoplasm. Functionally, RNA-binding component of the eukaryotic translation initiation factor 3 (eIF-3) complex, which is involved in protein synthesis of a specialized repertoire of mRNAs and, together with other initiation factors, stimulates binding of mRNA and methionyl-tRNAi to the 40S ribosome. The eIF-3 complex specifically targets and initiates translation of a subset of mRNAs involved in cell proliferation. The protein is Eukaryotic translation initiation factor 3 subunit B of Vanderwaltozyma polyspora (strain ATCC 22028 / DSM 70294 / BCRC 21397 / CBS 2163 / NBRC 10782 / NRRL Y-8283 / UCD 57-17) (Kluyveromyces polysporus).